The chain runs to 587 residues: Tail sheath protein (587 aa).

Belongs to the myoviridae tail sheath protein family. As to quaternary structure, homomultimer.

It is found in the virion. The protein localises to the host cytoplasm. Functionally, polymerizes as an extended structure around the baseplate-tail tube complex. During ejection, the sheath shifts to a contracted form, thereby making the inner tail tube protrude through the host cell envelope. The sequence is that of Tail sheath protein from Staphylococcus phage Twort (strain DSM 17442 / HER 48) (Bacteriophage Twort).